The primary structure comprises 431 residues: Nuclear bridge Ish domain protein les1 (431 aa).

Residues 1–21 (MQPRFLLHGALLALGIQLCLS) form the signal peptide.

The protein localises to the nucleus inner membrane. Inner nuclear envelope protein involved in nuclear fission, which is achieved via local disassembly of nuclear pores within the narrow bridge that links segregating daughter nuclei. Les1 restricts the process of local nuclear envelope breakdown to the bridge midzone to prevent the leakage of material from daughter nuclei during mitosis. The protein is Nuclear bridge Ish domain protein les1 of Schizosaccharomyces pombe (strain 972 / ATCC 24843) (Fission yeast).